Here is a 208-residue protein sequence, read N- to C-terminus: Imidazoleglycerol-phosphate dehydratase (208 aa).

It belongs to the imidazoleglycerol-phosphate dehydratase family.

The catalysed reaction is D-erythro-1-(imidazol-4-yl)glycerol 3-phosphate = 3-(imidazol-4-yl)-2-oxopropyl phosphate + H2O. It participates in amino-acid biosynthesis; L-histidine biosynthesis; L-histidine from 5-phospho-alpha-D-ribose 1-diphosphate: step 6/9. The chain is Imidazoleglycerol-phosphate dehydratase (his3) from Trichoderma harzianum (Hypocrea lixii).